The chain runs to 317 residues: Ferrochelatase (317 aa).

Residues H191 and E271 each contribute to the Fe cation site.

The protein belongs to the ferrochelatase family.

The protein resides in the cytoplasm. It catalyses the reaction heme b + 2 H(+) = protoporphyrin IX + Fe(2+). The protein operates within porphyrin-containing compound metabolism; protoheme biosynthesis; protoheme from protoporphyrin-IX: step 1/1. Functionally, catalyzes the ferrous insertion into protoporphyrin IX. In Thermus thermophilus (strain ATCC BAA-163 / DSM 7039 / HB27), this protein is Ferrochelatase.